The following is a 389-amino-acid chain: Galactokinase (389 aa).

33 to 36 (EHTD) lines the substrate pocket. Residues serine 67 and 124-130 (GAGLSSS) contribute to the ATP site. Mg(2+) contacts are provided by serine 130 and glutamate 162. Residue aspartate 174 is the Proton acceptor of the active site. Tyrosine 224 contacts substrate.

Belongs to the GHMP kinase family. GalK subfamily.

It localises to the cytoplasm. The catalysed reaction is alpha-D-galactose + ATP = alpha-D-galactose 1-phosphate + ADP + H(+). It functions in the pathway carbohydrate metabolism; galactose metabolism. Functionally, catalyzes the transfer of the gamma-phosphate of ATP to D-galactose to form alpha-D-galactose-1-phosphate (Gal-1-P). In Fusobacterium nucleatum subsp. nucleatum (strain ATCC 25586 / DSM 15643 / BCRC 10681 / CIP 101130 / JCM 8532 / KCTC 2640 / LMG 13131 / VPI 4355), this protein is Galactokinase.